Here is a 130-residue protein sequence, read N- to C-terminus: Protein LLP homolog (130 aa).

The segment covering 1-21 (MAKSLRSKWKRKMRAEKRKKN) has biased composition (basic residues). Disordered regions lie at residues 1 to 23 (MAKSLRSKWKRKMRAEKRKKNAP) and 57 to 76 (QEKMQCEEGRCDGADEEKDD). Positions 10-78 (KRKMRAEKRK…GADEEKDDMK (69 aa)) form a coiled coil. Residue lysine 78 forms a Glycyl lysine isopeptide (Lys-Gly) (interchain with G-Cter in SUMO2) linkage. The segment covering 104–124 (RQRKRLKAKREKKRGKSRAKA) has biased composition (basic residues). The tract at residues 104–130 (RQRKRLKAKREKKRGKSRAKAAKGLAW) is disordered.

This sequence belongs to the learning-associated protein family. As to quaternary structure, interacts with CTCF, MYO1C and with the transcriptional machinery, including RNA polymerase II and TBP. In terms of tissue distribution, widely expressed, with high levels in testis and spleen and low levels in heart. In the brain, expressed in the cortex and hippocampus, and at very low levels in the cerebellum.

It is found in the nucleus. The protein resides in the nucleolus. It localises to the chromosome. In terms of biological role, in hippocampal neurons, regulates dendritic and spine growth and synaptic transmission. This is Protein LLP homolog (Llph) from Mus musculus (Mouse).